We begin with the raw amino-acid sequence, 316 residues long: 4-hydroxy-3-methylbut-2-enyl diphosphate reductase (316 aa).

C12 contacts [4Fe-4S] cluster. Residues H41 and H74 each contribute to the (2E)-4-hydroxy-3-methylbut-2-enyl diphosphate site. Dimethylallyl diphosphate contacts are provided by H41 and H74. Isopentenyl diphosphate is bound by residues H41 and H74. [4Fe-4S] cluster is bound at residue C96. Position 124 (H124) interacts with (2E)-4-hydroxy-3-methylbut-2-enyl diphosphate. A dimethylallyl diphosphate-binding site is contributed by H124. Residue H124 participates in isopentenyl diphosphate binding. Residue E126 is the Proton donor of the active site. T169 lines the (2E)-4-hydroxy-3-methylbut-2-enyl diphosphate pocket. Residue C199 coordinates [4Fe-4S] cluster. (2E)-4-hydroxy-3-methylbut-2-enyl diphosphate-binding residues include S227, S228, N229, and S271. Residues S227, S228, N229, and S271 each coordinate dimethylallyl diphosphate. Positions 227, 228, 229, and 271 each coordinate isopentenyl diphosphate.

Belongs to the IspH family. [4Fe-4S] cluster serves as cofactor.

The enzyme catalyses isopentenyl diphosphate + 2 oxidized [2Fe-2S]-[ferredoxin] + H2O = (2E)-4-hydroxy-3-methylbut-2-enyl diphosphate + 2 reduced [2Fe-2S]-[ferredoxin] + 2 H(+). It catalyses the reaction dimethylallyl diphosphate + 2 oxidized [2Fe-2S]-[ferredoxin] + H2O = (2E)-4-hydroxy-3-methylbut-2-enyl diphosphate + 2 reduced [2Fe-2S]-[ferredoxin] + 2 H(+). The protein operates within isoprenoid biosynthesis; dimethylallyl diphosphate biosynthesis; dimethylallyl diphosphate from (2E)-4-hydroxy-3-methylbutenyl diphosphate: step 1/1. Its pathway is isoprenoid biosynthesis; isopentenyl diphosphate biosynthesis via DXP pathway; isopentenyl diphosphate from 1-deoxy-D-xylulose 5-phosphate: step 6/6. In terms of biological role, catalyzes the conversion of 1-hydroxy-2-methyl-2-(E)-butenyl 4-diphosphate (HMBPP) into a mixture of isopentenyl diphosphate (IPP) and dimethylallyl diphosphate (DMAPP). Acts in the terminal step of the DOXP/MEP pathway for isoprenoid precursor biosynthesis. In Vibrio vulnificus (strain CMCP6), this protein is 4-hydroxy-3-methylbut-2-enyl diphosphate reductase.